A 345-amino-acid chain; its full sequence is Platelet-derived growth factor C (345 aa).

The first 22 residues, 1–22 (MLLLGLLLLTSALAGQRTGTRA), serve as a signal peptide directing secretion. Positions 24–33 (SNLSSKLQLS) are enriched in polar residues. A disordered region spans residues 24–45 (SNLSSKLQLSSDKEQNGVQDPR). An N-linked (GlcNAc...) asparagine glycan is attached at Asn25. Positions 34–45 (SDKEQNGVQDPR) are enriched in basic and acidic residues. The CUB domain maps to 46–163 (HERVVTISGN…PGFCIHYSII (118 aa)). Asn55 carries N-linked (GlcNAc...) asparagine glycosylation. Cystine bridges form between Cys104–Cys124, Cys250–Cys294, Cys280–Cys335, and Cys287–Cys337.

This sequence belongs to the PDGF/VEGF growth factor family. As to quaternary structure, homodimer; disulfide-linked. Interacts with PDGFRA homodimers, and with heterodimers formed by PDGFRA and PDGFRB. Interacts (via CUB domain) with PLAT (via kringle domain). In terms of processing, proteolytic removal of the N-terminal CUB domain releasing the core domain is necessary for unmasking the receptor-binding epitopes of the core domain. Cleavage after basic residues in the hinge region (region connecting the CUB and growth factor domains) gives rise to the receptor-binding form. Cleaved by PLAT and PLG. Sumoylated by SUMO1. Post-translationally, N-glycosylated. In terms of tissue distribution, mainly expressed in kidney, testis, liver, heart and brain (at protein level). Highly expressed in airway epithelium, interstitial cells and alveolar macrophages in the lung of mice overexpressing IL13. Expressed in the ovaries.

Its subcellular location is the cytoplasm. The protein localises to the cytosol. It is found in the secreted. It localises to the nucleus. The protein resides in the cytoplasmic granule. Its subcellular location is the cell membrane. In terms of biological role, growth factor that plays an essential role in the regulation of embryonic development, cell proliferation, cell migration, survival and chemotaxis. Potent mitogen and chemoattractant for cells of mesenchymal origin. Required for normal skeleton formation during embryonic development, especially for normal development of the craniofacial skeleton and for normal development of the palate. Required for normal skin morphogenesis during embryonic development. Plays an important role in wound healing, where it appears to be involved in three stages: inflammation, proliferation and remodeling. Plays an important role in angiogenesis and blood vessel development. Involved in fibrotic processes, in which transformation of interstitial fibroblasts into myofibroblasts plus collagen deposition occurs. The CUB domain has mitogenic activity in coronary artery smooth muscle cells, suggesting a role beyond the maintenance of the latency of the PDGF domain. In the nucleus, PDGFC seems to have additional function. In Mus musculus (Mouse), this protein is Platelet-derived growth factor C (Pdgfc).